The chain runs to 357 residues: Peptide chain release factor 1 (357 aa).

Residue Q233 is modified to N5-methylglutamine.

The protein belongs to the prokaryotic/mitochondrial release factor family. In terms of processing, methylated by PrmC. Methylation increases the termination efficiency of RF1.

The protein localises to the cytoplasm. Functionally, peptide chain release factor 1 directs the termination of translation in response to the peptide chain termination codons UAG and UAA. The chain is Peptide chain release factor 1 from Syntrophus aciditrophicus (strain SB).